The sequence spans 257 residues: MLAKRIIPCLDVKDGQVVKGVQFRNHEIVGDIVPLAKRYAEEGADELVFYDITASSDARVVDKSWVSRVAEVIDIPFCVAGGIKTIDDARRILEFGADKVSINSPALADPSLINRLSEKFGVQCIVIGIDSYFDKETGLYQVKQFTGNEKATLTTKWNTFDWIKEVQSRGAGEIVLNVMNQDGVRCGYDIDQLTQARAVCNVPLIASGGAGEMVHFAEVFKQADVDGALAASVFHKQIINIGELKAYLKTQQVEIRL.

Residues Asp-11 and Asp-130 contribute to the active site.

The protein belongs to the HisA/HisF family. Heterodimer of HisH and HisF.

It localises to the cytoplasm. It catalyses the reaction 5-[(5-phospho-1-deoxy-D-ribulos-1-ylimino)methylamino]-1-(5-phospho-beta-D-ribosyl)imidazole-4-carboxamide + L-glutamine = D-erythro-1-(imidazol-4-yl)glycerol 3-phosphate + 5-amino-1-(5-phospho-beta-D-ribosyl)imidazole-4-carboxamide + L-glutamate + H(+). The protein operates within amino-acid biosynthesis; L-histidine biosynthesis; L-histidine from 5-phospho-alpha-D-ribose 1-diphosphate: step 5/9. Functionally, IGPS catalyzes the conversion of PRFAR and glutamine to IGP, AICAR and glutamate. The HisF subunit catalyzes the cyclization activity that produces IGP and AICAR from PRFAR using the ammonia provided by the HisH subunit. This Psychromonas ingrahamii (strain DSM 17664 / CCUG 51855 / 37) protein is Imidazole glycerol phosphate synthase subunit HisF.